The following is a 474-amino-acid chain: tRNA-2-methylthio-N(6)-dimethylallyladenosine synthase (474 aa).

Residues 3 to 120 (KKLHIKTWGC…LPEMINSVRG (118 aa)) form the MTTase N-terminal domain. Residues C12, C49, C83, C157, C161, and C164 each contribute to the [4Fe-4S] cluster site. One can recognise a Radical SAM core domain in the interval 143 to 375 (RAEGPTAFVS…QERINQQAMA (233 aa)). In terms of domain architecture, TRAM spans 378–441 (RRMLGTVQRI…TNSLRGKVVR (64 aa)).

This sequence belongs to the methylthiotransferase family. MiaB subfamily. In terms of assembly, monomer. [4Fe-4S] cluster is required as a cofactor.

It is found in the cytoplasm. The catalysed reaction is N(6)-dimethylallyladenosine(37) in tRNA + (sulfur carrier)-SH + AH2 + 2 S-adenosyl-L-methionine = 2-methylsulfanyl-N(6)-dimethylallyladenosine(37) in tRNA + (sulfur carrier)-H + 5'-deoxyadenosine + L-methionine + A + S-adenosyl-L-homocysteine + 2 H(+). In terms of biological role, catalyzes the methylthiolation of N6-(dimethylallyl)adenosine (i(6)A), leading to the formation of 2-methylthio-N6-(dimethylallyl)adenosine (ms(2)i(6)A) at position 37 in tRNAs that read codons beginning with uridine. This is tRNA-2-methylthio-N(6)-dimethylallyladenosine synthase from Citrobacter koseri (strain ATCC BAA-895 / CDC 4225-83 / SGSC4696).